Reading from the N-terminus, the 103-residue chain is Co-chaperonin GroES (103 aa).

Belongs to the GroES chaperonin family. Heptamer of 7 subunits arranged in a ring. Interacts with the chaperonin GroEL.

The protein resides in the cytoplasm. In terms of biological role, together with the chaperonin GroEL, plays an essential role in assisting protein folding. The GroEL-GroES system forms a nano-cage that allows encapsulation of the non-native substrate proteins and provides a physical environment optimized to promote and accelerate protein folding. GroES binds to the apical surface of the GroEL ring, thereby capping the opening of the GroEL channel. The protein is Co-chaperonin GroES of Microcystis aeruginosa (strain NIES-843 / IAM M-2473).